Here is a 661-residue protein sequence, read N- to C-terminus: Pumilio domain-containing protein C56F2.08c (661 aa).

An RRM domain is found at 1-74; that stretch reads MLYVSNLPVG…GPVQVMLAKP (74 aa). At S102 the chain carries Phosphoserine. T104 bears the Phosphothreonine mark. Residue S105 is modified to Phosphoserine. Residues 129–482 enclose the PUM-HD domain; that stretch reads INLDIVDSMI…RLMEEVGMTS (354 aa). Pumilio repeat units lie at residues 191-226, 227-263, 264-302, and 374-410; these read SMLD…AMLE, RIAP…LIVK, HLRP…VMAR, and HLAT…LLLK. 4 positions are modified to phosphoserine: S482, S486, S488, and S490.

It localises to the cytoplasm. This chain is Pumilio domain-containing protein C56F2.08c, found in Schizosaccharomyces pombe (strain 972 / ATCC 24843) (Fission yeast).